The following is a 1206-amino-acid chain: DNA polymerase (1206 aa).

The protein belongs to the DNA polymerase type-B family.

It catalyses the reaction DNA(n) + a 2'-deoxyribonucleoside 5'-triphosphate = DNA(n+1) + diphosphate. The sequence is that of DNA polymerase (dpo) from Pyramimonas orientalis virus (PoV01).